We begin with the raw amino-acid sequence, 311 residues long: DNA replication terminus site-binding protein (311 aa).

The protein belongs to the Tus family.

The protein resides in the cytoplasm. Functionally, trans-acting protein required for termination of DNA replication. Binds to DNA replication terminator sequences (terA to terF) to prevent the passage of replication forks. The termination efficiency will be affected by the affinity of this protein for the terminator sequence. This chain is DNA replication terminus site-binding protein, found in Yersinia pseudotuberculosis serotype O:1b (strain IP 31758).